Consider the following 109-residue polypeptide: Cytochrome c6 (109 aa).

Residues 1–25 form the signal peptide; that stretch reads MFKNIIIVVAVTLCALFTNEHVVYS. 4 residues coordinate heme c: Cys-39, Cys-42, His-43, and Met-83.

The protein belongs to the cytochrome c family. PetJ subfamily. As to quaternary structure, monomer. Binds 1 heme c group covalently per subunit.

It is found in the plastid. The protein localises to the chloroplast thylakoid lumen. Functionally, functions as an electron carrier between membrane-bound cytochrome b6-f and photosystem I in oxygenic photosynthesis. This is Cytochrome c6 (petJ) from Cyanidium caldarium (Red alga).